A 95-amino-acid polypeptide reads, in one-letter code: Co-chaperonin GroES (95 aa).

Belongs to the GroES chaperonin family. As to quaternary structure, heptamer of 7 subunits arranged in a ring. Interacts with the chaperonin GroEL.

Its subcellular location is the cytoplasm. Together with the chaperonin GroEL, plays an essential role in assisting protein folding. The GroEL-GroES system forms a nano-cage that allows encapsulation of the non-native substrate proteins and provides a physical environment optimized to promote and accelerate protein folding. GroES binds to the apical surface of the GroEL ring, thereby capping the opening of the GroEL channel. The chain is Co-chaperonin GroES from Lachnoclostridium phytofermentans (strain ATCC 700394 / DSM 18823 / ISDg) (Clostridium phytofermentans).